A 428-amino-acid polypeptide reads, in one-letter code: Glutamyl-tRNA reductase (428 aa).

Substrate-binding positions include 55-58, S114, 119-121, and Q125; these read TCNR and ETQ. C56 serves as the catalytic Nucleophile. An NADP(+)-binding site is contributed by 194 to 199; that stretch reads GAGEMI.

Belongs to the glutamyl-tRNA reductase family. Homodimer.

It catalyses the reaction (S)-4-amino-5-oxopentanoate + tRNA(Glu) + NADP(+) = L-glutamyl-tRNA(Glu) + NADPH + H(+). It functions in the pathway porphyrin-containing compound metabolism; protoporphyrin-IX biosynthesis; 5-aminolevulinate from L-glutamyl-tRNA(Glu): step 1/2. In terms of biological role, catalyzes the NADPH-dependent reduction of glutamyl-tRNA(Glu) to glutamate 1-semialdehyde (GSA). In Paraburkholderia phytofirmans (strain DSM 17436 / LMG 22146 / PsJN) (Burkholderia phytofirmans), this protein is Glutamyl-tRNA reductase.